Here is a 195-residue protein sequence, read N- to C-terminus: Imidazoleglycerol-phosphate dehydratase (195 aa).

This sequence belongs to the imidazoleglycerol-phosphate dehydratase family.

The protein resides in the cytoplasm. The catalysed reaction is D-erythro-1-(imidazol-4-yl)glycerol 3-phosphate = 3-(imidazol-4-yl)-2-oxopropyl phosphate + H2O. It participates in amino-acid biosynthesis; L-histidine biosynthesis; L-histidine from 5-phospho-alpha-D-ribose 1-diphosphate: step 6/9. This is Imidazoleglycerol-phosphate dehydratase from Haloarcula marismortui (strain ATCC 43049 / DSM 3752 / JCM 8966 / VKM B-1809) (Halobacterium marismortui).